Consider the following 1202-residue polypeptide: DNA-directed RNA polymerase subunit beta' (1202 aa).

Residues cysteine 60, cysteine 62, cysteine 75, and cysteine 78 each contribute to the Zn(2+) site. The tract at residues 301 to 320 is disordered; it reads GRRGKPVTGPGNRPLKSLSD. 3 residues coordinate Mg(2+): aspartate 451, aspartate 453, and aspartate 455. Zn(2+) is bound by residues cysteine 793, cysteine 867, cysteine 874, and cysteine 877. The tract at residues 1168-1202 is disordered; it reads DMIEAEKAQASNDSEEAEESTIISGNYESLQDEDK.

This sequence belongs to the RNA polymerase beta' chain family. In terms of assembly, the RNAP catalytic core consists of 2 alpha, 1 beta, 1 beta' and 1 omega subunit. When a sigma factor is associated with the core the holoenzyme is formed, which can initiate transcription. The cofactor is Mg(2+). Requires Zn(2+) as cofactor.

The catalysed reaction is RNA(n) + a ribonucleoside 5'-triphosphate = RNA(n+1) + diphosphate. Its function is as follows. DNA-dependent RNA polymerase catalyzes the transcription of DNA into RNA using the four ribonucleoside triphosphates as substrates. The chain is DNA-directed RNA polymerase subunit beta' from Finegoldia magna (strain ATCC 29328 / DSM 20472 / WAL 2508) (Peptostreptococcus magnus).